A 79-amino-acid chain; its full sequence is Conotoxin VnMSGL-0122 (79 aa).

The N-terminal stretch at 1–20 (MSGLGIMVLALLLLVFMATS) is a signal peptide. Positions 21–44 (HQDGGGKQATQRDAINVRRRRSIT) are excised as a propeptide. 3 disulfides stabilise this stretch: Cys52–Cys64, Cys56–Cys73, and Cys63–Cys77. A Leucine amide modification is found at Leu78.

This sequence belongs to the conotoxin O3 superfamily. Expressed by the venom duct.

The protein resides in the secreted. The polypeptide is Conotoxin VnMSGL-0122 (Conus ventricosus (Mediterranean cone)).